The following is an 823-amino-acid chain: Molybdenum cofactor sulfurase (823 aa).

N6-(pyridoxal phosphate)lysine is present on lysine 228. Cysteine 392 is a catalytic residue. Residues 628–667 are disordered; sequence SSTRLAEPRRGLGSRKSPLRPAMPGAFPQDTPTPEAERNP. The MOSC domain maps to 644 to 819; that stretch reads SPLRPAMPGA…VMVGDVVTPS (176 aa).

The protein belongs to the class-V pyridoxal-phosphate-dependent aminotransferase family. MOCOS subfamily. It depends on pyridoxal 5'-phosphate as a cofactor.

The enzyme catalyses Mo-molybdopterin + L-cysteine + AH2 = thio-Mo-molybdopterin + L-alanine + A + H2O. It functions in the pathway cofactor biosynthesis; molybdopterin biosynthesis. Its function is as follows. Sulfurates the molybdenum cofactor. Sulfation of molybdenum is essential for xanthine dehydrogenase (XDH) and aldehyde oxidase (ADO) enzymes in which molybdenum cofactor is liganded by 1 oxygen and 1 sulfur atom in active form. This is Molybdenum cofactor sulfurase from Aspergillus niger (strain ATCC MYA-4892 / CBS 513.88 / FGSC A1513).